Here is a 567-residue protein sequence, read N- to C-terminus: Proline--tRNA ligase (567 aa).

The protein belongs to the class-II aminoacyl-tRNA synthetase family. ProS type 1 subfamily. In terms of assembly, homodimer.

Its subcellular location is the cytoplasm. The catalysed reaction is tRNA(Pro) + L-proline + ATP = L-prolyl-tRNA(Pro) + AMP + diphosphate. Catalyzes the attachment of proline to tRNA(Pro) in a two-step reaction: proline is first activated by ATP to form Pro-AMP and then transferred to the acceptor end of tRNA(Pro). As ProRS can inadvertently accommodate and process non-cognate amino acids such as alanine and cysteine, to avoid such errors it has two additional distinct editing activities against alanine. One activity is designated as 'pretransfer' editing and involves the tRNA(Pro)-independent hydrolysis of activated Ala-AMP. The other activity is designated 'posttransfer' editing and involves deacylation of mischarged Ala-tRNA(Pro). The misacylated Cys-tRNA(Pro) is not edited by ProRS. The protein is Proline--tRNA ligase of Campylobacter fetus subsp. fetus (strain 82-40).